Reading from the N-terminus, the 2531-residue chain is Putative neurobeachin homolog (2531 aa).

Composition is skewed to acidic residues over residues 1–10, 26–35, and 62–74; these read MDISETEYND, EDEVNDEESN, and EPSD…EESE. Disordered regions lie at residues 1-101, 1363-1398, 1420-1440, and 1642-1670; these read MDIS…SPPP, NDGD…DNGG, EELK…MPPQ, and RFVP…EISE. Basic and acidic residues predominate over residues 1363–1379; that stretch reads NDGDHASIKNGSDHSEN. Over residues 1427–1440 the composition is skewed to polar residues; sequence QSNGRRPSTLMPPQ. Positions 1650-1670 are enriched in basic and acidic residues; the sequence is SRHEEANLPEGEKNEEPEISE. The BEACH-type PH domain maps to 1714 to 1822; it reads PSSQSACFST…TVRKVVYQLP (109 aa). Residues 1841–2130 form the BEACH domain; it reads MTPRQLFKHS…QLLAEAHPPR (290 aa). WD repeat units follow at residues 2289 to 2332, 2350 to 2389, 2429 to 2468, and 2471 to 2510; these read GHGD…GFIA, GHEA…LRRI, LSEE…KLYT, and PLNS…WHYE.

This sequence belongs to the WD repeat neurobeachin family. In terms of assembly, interacts with RII subunit of PKA.

The protein localises to the cytoplasm. It is found in the membrane. The protein resides in the nucleus. In terms of biological role, binds to type II regulatory subunits of protein kinase A and anchors/targets them to the membrane. May anchor the kinase to cytoskeletal and/or organelle-associated proteins. Regulates endosomal traffic in polarized epithelial cells such as the vulval precursor cells and intestinal cells. Thought to act as a negative regulator of lin-12 activity in vulval precursor cells. May have a role in the internalization process from basolateral surface of polarized epithelial cells. This is Putative neurobeachin homolog from Caenorhabditis briggsae.